Consider the following 213-residue polypeptide: Octanoyltransferase (213 aa).

One can recognise a BPL/LPL catalytic domain in the interval 32–207 (ENTPDEIWLV…NILALLNNPP (176 aa)). Residues 71 to 78 (RGGQVTYH), 138 to 140 (SLG), and 151 to 153 (GLA) contribute to the substrate site. C169 acts as the Acyl-thioester intermediate in catalysis.

The protein belongs to the LipB family.

The protein localises to the cytoplasm. It catalyses the reaction octanoyl-[ACP] + L-lysyl-[protein] = N(6)-octanoyl-L-lysyl-[protein] + holo-[ACP] + H(+). The protein operates within protein modification; protein lipoylation via endogenous pathway; protein N(6)-(lipoyl)lysine from octanoyl-[acyl-carrier-protein]: step 1/2. In terms of biological role, catalyzes the transfer of endogenously produced octanoic acid from octanoyl-acyl-carrier-protein onto the lipoyl domains of lipoate-dependent enzymes. Lipoyl-ACP can also act as a substrate although octanoyl-ACP is likely to be the physiological substrate. This Citrobacter koseri (strain ATCC BAA-895 / CDC 4225-83 / SGSC4696) protein is Octanoyltransferase.